The sequence spans 418 residues: Secernin-3 (418 aa).

The propeptide occupies 1-5 (MEPYS). The active site involves C6. Glyoxylic acid (Cys); alternate is present on C6. The residue at position 6 (C6) is a Pyruvic acid (Cys); alternate.

The protein belongs to the peptidase C69 family. Secernin subfamily.

Functionally, plays a role in thermal nociception. The chain is Secernin-3 (Scrn3) from Mus musculus (Mouse).